The sequence spans 614 residues: BPI fold-containing family B member 4 (614 aa).

An N-terminal signal peptide occupies residues 1-18; sequence MWMAWCVAALSVVAVCGT. Asn-273 carries an N-linked (GlcNAc...) asparagine glycan. Cys-295 and Cys-332 are joined by a disulfide.

This sequence belongs to the BPI/LBP/Plunc superfamily. BPI/LBP family. As to expression, expressed in nasal tissue.

The protein localises to the secreted. The protein resides in the cytoplasm. Functionally, may have the capacity to recognize and bind specific classes of odorants. May act as a carrier molecule, transporting odorants across the mucus layer to access receptor sites. May serve as a primary defense mechanism by recognizing and removing potentially harmful odorants or pathogenic microorganisms from the mucosa or clearing excess odorant from mucus to enable new odorant stimuli to be received. The polypeptide is BPI fold-containing family B member 4 (BPIFB4) (Homo sapiens (Human)).